Here is a 131-residue protein sequence, read N- to C-terminus: Single-stranded DNA-binding protein 2 (131 aa).

In terms of domain architecture, SSB spans 1–103; sequence MYNKVIMIGR…VLASSFQLLE (103 aa). Residues 126-131 carry the Important for interaction with partner proteins motif; that stretch reads EEELPF.

In terms of assembly, homotetramer.

Functionally, plays an important role in DNA replication, recombination and repair. Binds to ssDNA and to an array of partner proteins to recruit them to their sites of action during DNA metabolism. This Streptococcus agalactiae serotype III (strain NEM316) protein is Single-stranded DNA-binding protein 2 (ssb2).